A 207-amino-acid chain; its full sequence is Large ribosomal subunit protein bL25 (207 aa).

This sequence belongs to the bacterial ribosomal protein bL25 family. CTC subfamily. As to quaternary structure, part of the 50S ribosomal subunit; part of the 5S rRNA/L5/L18/L25 subcomplex. Contacts the 5S rRNA. Binds to the 5S rRNA independently of L5 and L18.

Its function is as follows. This is one of the proteins that binds to the 5S RNA in the ribosome where it forms part of the central protuberance. This is Large ribosomal subunit protein bL25 from Orientia tsutsugamushi (strain Ikeda) (Rickettsia tsutsugamushi).